A 262-amino-acid chain; its full sequence is ATP synthase subunit a (262 aa).

The next 5 membrane-spanning stretches (helical) occupy residues Asn-25–Phe-45, Val-86–Ile-106, Asp-130–Val-150, Leu-204–Leu-226, and Leu-240–Ala-260.

It belongs to the ATPase A chain family. In terms of assembly, F-type ATPases have 2 components, CF(1) - the catalytic core - and CF(0) - the membrane proton channel. CF(1) has five subunits: alpha(3), beta(3), gamma(1), delta(1), epsilon(1). CF(0) has three main subunits: a(1), b(2) and c(9-12). The alpha and beta chains form an alternating ring which encloses part of the gamma chain. CF(1) is attached to CF(0) by a central stalk formed by the gamma and epsilon chains, while a peripheral stalk is formed by the delta and b chains.

The protein resides in the cell inner membrane. Functionally, key component of the proton channel; it plays a direct role in the translocation of protons across the membrane. In Mannheimia succiniciproducens (strain KCTC 0769BP / MBEL55E), this protein is ATP synthase subunit a.